The chain runs to 480 residues: MTVTKMSWRPQYRSSKFRNVYGKVANREHCFDGIPITKNVHDNHFCAVNTRFLAIVTESAGGGSFLVIPLEQTGRIEPNYPKVCGHQGNVLDIKWNPFIDNIIASCSEDTSVRIWEIPEGGLKRNMTEALLELHGHSRRVGLVEWHPTTNNILFSAGYDYKVLIWNLDVGEPVKMIDCHTDVILCMSFNTDGSLLTTTCKDKKLRVIEPRSGRVLQEANCKNHRVNRVVFLGNMKRLLTTGVSRWNTRQIALWDQEDLSMPLIEEEIDGLSGLLFPFYDADTHMLYLAGKGDGNIRYYEISTEKPYLSYLMEFRSPAPQKGLGVMPKHGLDVSACEVFRFYKLVTLKGLIEPISMIVPRRSDSYQEDIYPMTPGTEPALTPDEWLGGINRDPVLMSLKEGYKKSSKMVFKAPIKEKKSVVVNGIDLLENVPPRTENELLRMFFRQQDEIRRLKEELAQKDIRIRQLQLELKNLRNSPKNC.

WD repeat units lie at residues 29-77 (HCFD…GRIE), 78-127 (PNYP…RNMT), 128-170 (EALL…LDVG), 171-212 (EPVK…PRSG), 213-259 (RVLQ…EDLS), 260-305 (MPLI…TEKP), and 306-345 (YLSY…KLVT). Residues 436 to 479 (NELLRMFFRQQDEIRRLKEELAQKDIRIRQLQLELKNLRNSPKN) adopt a coiled-coil conformation.

This sequence belongs to the WD repeat coronin family. As to quaternary structure, binds to F-actin and to vinculin. Expressed predominantly in brain.

Its subcellular location is the cytoplasm. The protein localises to the cytoskeleton. Its function is as follows. May play a role in the reorganization of neuronal actin structure. In Homo sapiens (Human), this protein is Coronin-2B (CORO2B).